Reading from the N-terminus, the 512-residue chain is UDP-N-acetylmuramate--L-alanine ligase (512 aa).

Residue 132 to 138 coordinates ATP; that stretch reads GAHGKTT.

The protein belongs to the MurCDEF family.

It localises to the cytoplasm. It catalyses the reaction UDP-N-acetyl-alpha-D-muramate + L-alanine + ATP = UDP-N-acetyl-alpha-D-muramoyl-L-alanine + ADP + phosphate + H(+). It participates in cell wall biogenesis; peptidoglycan biosynthesis. Its function is as follows. Cell wall formation. The chain is UDP-N-acetylmuramate--L-alanine ligase from Bifidobacterium longum subsp. infantis (strain ATCC 15697 / DSM 20088 / JCM 1222 / NCTC 11817 / S12).